Reading from the N-terminus, the 232-residue chain is ATP-dependent Clp protease proteolytic subunit 2 (232 aa).

Catalysis depends on serine 124, which acts as the Nucleophile. Residue histidine 149 is part of the active site.

Belongs to the peptidase S14 family. Fourteen ClpP subunits assemble into 2 heptameric rings which stack back to back to give a disk-like structure with a central cavity, resembling the structure of eukaryotic proteasomes.

It is found in the cytoplasm. The enzyme catalyses Hydrolysis of proteins to small peptides in the presence of ATP and magnesium. alpha-casein is the usual test substrate. In the absence of ATP, only oligopeptides shorter than five residues are hydrolyzed (such as succinyl-Leu-Tyr-|-NHMec, and Leu-Tyr-Leu-|-Tyr-Trp, in which cleavage of the -Tyr-|-Leu- and -Tyr-|-Trp bonds also occurs).. In terms of biological role, cleaves peptides in various proteins in a process that requires ATP hydrolysis. Has a chymotrypsin-like activity. Plays a major role in the degradation of misfolded proteins. This chain is ATP-dependent Clp protease proteolytic subunit 2, found in Nostoc sp. (strain PCC 7120 / SAG 25.82 / UTEX 2576).